The chain runs to 360 residues: Photosystem II protein D1 (360 aa).

3 consecutive transmembrane segments (helical) span residues Tyr-29–Thr-46, Gln-118–Leu-133, and Trp-142–Ala-156. Tyr-126 contacts pheophytin a. Positions 170 and 189 each coordinate [CaMn4O5] cluster. The chain crosses the membrane as a helical span at residues Phe-197–Leu-218. His-198 serves as a coordination point for chlorophyll a. Residues His-215 and Ser-264–Phe-265 each bind a quinone. Residue His-215 coordinates Fe cation. Residue His-272 coordinates Fe cation. The helical transmembrane segment at Phe-274–Met-288 threads the bilayer. Residues His-332, Glu-333, Asp-342, and Ala-344 each coordinate [CaMn4O5] cluster. The propeptide occupies Ser-345–Gly-360.

Belongs to the reaction center PufL/M/PsbA/D family. PSII is composed of 1 copy each of membrane proteins PsbA, PsbB, PsbC, PsbD, PsbE, PsbF, PsbH, PsbI, PsbJ, PsbK, PsbL, PsbM, PsbT, PsbX, PsbY, PsbZ, Psb30/Ycf12, peripheral proteins PsbO, CyanoQ (PsbQ), PsbU, PsbV and a large number of cofactors. It forms dimeric complexes. The D1/D2 heterodimer binds P680, chlorophylls that are the primary electron donor of PSII, and subsequent electron acceptors. It shares a non-heme iron and each subunit binds pheophytin, quinone, additional chlorophylls, carotenoids and lipids. D1 provides most of the ligands for the Mn4-Ca-O5 cluster of the oxygen-evolving complex (OEC). There is also a Cl(-1) ion associated with D1 and D2, which is required for oxygen evolution. The PSII complex binds additional chlorophylls, carotenoids and specific lipids. is required as a cofactor. Post-translationally, tyr-161 forms a radical intermediate that is referred to as redox-active TyrZ, YZ or Y-Z. In terms of processing, C-terminally processed by CtpA; processing is essential to allow assembly of the oxygen-evolving complex and thus photosynthetic growth.

It localises to the cellular thylakoid membrane. It catalyses the reaction 2 a plastoquinone + 4 hnu + 2 H2O = 2 a plastoquinol + O2. In terms of biological role, photosystem II (PSII) is a light-driven water:plastoquinone oxidoreductase that uses light energy to abstract electrons from H(2)O, generating O(2) and a proton gradient subsequently used for ATP formation. It consists of a core antenna complex that captures photons, and an electron transfer chain that converts photonic excitation into a charge separation. The D1/D2 (PsbA/PsbD) reaction center heterodimer binds P680, the primary electron donor of PSII as well as several subsequent electron acceptors. The protein is Photosystem II protein D1 of Synechocystis sp. (strain PCC 6714) (Aphanocapsa sp. (strain PCC 6714)).